We begin with the raw amino-acid sequence, 49 residues long: MRDLLSKKDPKLLKEYIDSGKIRIEGVGIGNQIKIALAKIFGILSDFYF.

This is an uncharacterized protein from Archaeoglobus fulgidus (strain ATCC 49558 / DSM 4304 / JCM 9628 / NBRC 100126 / VC-16).